Here is a 146-residue protein sequence, read N- to C-terminus: NADH-quinone oxidoreductase subunit A (146 aa).

Transmembrane regions (helical) follow at residues 14–34 (FGLFLIIAVGLCVFMLTGGFL), 68–88 (LVAMFFVIFDVEALYLYAWAV), and 96–116 (IGFIEATIFILVLLAGLIYLV).

The protein belongs to the complex I subunit 3 family. As to quaternary structure, NDH-1 is composed of 13 different subunits. Subunits NuoA, H, J, K, L, M, N constitute the membrane sector of the complex.

It localises to the cell inner membrane. The catalysed reaction is a quinone + NADH + 5 H(+)(in) = a quinol + NAD(+) + 4 H(+)(out). In terms of biological role, NDH-1 shuttles electrons from NADH, via FMN and iron-sulfur (Fe-S) centers, to quinones in the respiratory chain. The immediate electron acceptor for the enzyme in this species is believed to be ubiquinone. Couples the redox reaction to proton translocation (for every two electrons transferred, four hydrogen ions are translocated across the cytoplasmic membrane), and thus conserves the redox energy in a proton gradient. This Pectobacterium carotovorum subsp. carotovorum (Erwinia carotovora subsp. carotovora) protein is NADH-quinone oxidoreductase subunit A.